A 157-amino-acid chain; its full sequence is Endoribonuclease YbeY (157 aa).

Zn(2+) contacts are provided by histidine 116, histidine 120, and histidine 126.

The protein belongs to the endoribonuclease YbeY family. Zn(2+) is required as a cofactor.

The protein resides in the cytoplasm. In terms of biological role, single strand-specific metallo-endoribonuclease involved in late-stage 70S ribosome quality control and in maturation of the 3' terminus of the 16S rRNA. The sequence is that of Endoribonuclease YbeY from Renibacterium salmoninarum (strain ATCC 33209 / DSM 20767 / JCM 11484 / NBRC 15589 / NCIMB 2235).